The sequence spans 104 residues: Large ribosomal subunit protein uL24 (104 aa).

This sequence belongs to the universal ribosomal protein uL24 family. As to quaternary structure, part of the 50S ribosomal subunit.

In terms of biological role, one of two assembly initiator proteins, it binds directly to the 5'-end of the 23S rRNA, where it nucleates assembly of the 50S subunit. One of the proteins that surrounds the polypeptide exit tunnel on the outside of the subunit. The chain is Large ribosomal subunit protein uL24 from Anaplasma phagocytophilum (strain HZ).